Consider the following 484-residue polypeptide: MGKHTSEHKNHAQIVQLLQDGQYFFHKGLKAYKERNLKRASKLIQRAVHLEPEDSEMLSQLAVIYSEMGQYQESNDLLDYIMANLEAEMPECHYFKANNFAHLGLFQEAYKEAAAYSDADPDGEFAEENDSLLDLLDLGDDGIEDSLYDQDELLVKQDRAKSLLESGQLAEAVAALEEITTEYPELWSAYNNLALAYFYSGNVVKAKQTAYEVLSHNEGNLHALCNLLVFYYYEREDEKVAELSDQLSNVYPMLLEQRYKLGATLALVGRYEIGYKWLKSLYKTGFEGDDTFFYWLSCSAYFTGHTDFAETIWRKVESQYPGEDRPAPWIERREALPSSVEQRLAAYYISSTKGETEHLEAVIRSKRITAPFETHFVKLLLNGDSAAADVSEDALFAYQTVKLLEQAEKEEMKTEVMSCWVFHVIQQIRAAAPLKNEKGWAAAICYIWKEAHGKQDTKKDTAARFGISPATLTKYMKYIDDILE.

TPR repeat units lie at residues 21-54 (GQYF…EPED), 55-88 (SEML…LEAE), and 187-220 (WSAY…NEGN).

The sequence is that of TPR repeat-containing protein YvcD (yvcD) from Bacillus subtilis (strain 168).